A 133-amino-acid chain; its full sequence is Ribonuclease P protein component (133 aa).

Residues 114 to 133 (RSRPTPEEKSEPAGVDSTDA) form a disordered region.

The protein belongs to the RnpA family. Consists of a catalytic RNA component (M1 or rnpB) and a protein subunit.

The enzyme catalyses Endonucleolytic cleavage of RNA, removing 5'-extranucleotides from tRNA precursor.. RNaseP catalyzes the removal of the 5'-leader sequence from pre-tRNA to produce the mature 5'-terminus. It can also cleave other RNA substrates such as 4.5S RNA. The protein component plays an auxiliary but essential role in vivo by binding to the 5'-leader sequence and broadening the substrate specificity of the ribozyme. This chain is Ribonuclease P protein component, found in Pseudomonas syringae pv. tomato (strain ATCC BAA-871 / DC3000).